Here is a 91-residue protein sequence, read N- to C-terminus: DNA-directed RNA polymerase subunit omega (91 aa).

It belongs to the RNA polymerase subunit omega family. In terms of assembly, the RNAP catalytic core consists of 2 alpha, 1 beta, 1 beta' and 1 omega subunit. When a sigma factor is associated with the core the holoenzyme is formed, which can initiate transcription.

It catalyses the reaction RNA(n) + a ribonucleoside 5'-triphosphate = RNA(n+1) + diphosphate. In terms of biological role, promotes RNA polymerase assembly. Latches the N- and C-terminal regions of the beta' subunit thereby facilitating its interaction with the beta and alpha subunits. The polypeptide is DNA-directed RNA polymerase subunit omega (Pectobacterium atrosepticum (strain SCRI 1043 / ATCC BAA-672) (Erwinia carotovora subsp. atroseptica)).